We begin with the raw amino-acid sequence, 49 residues long: Small ribosomal subunit protein uS14B (49 aa).

This sequence belongs to the universal ribosomal protein uS14 family. Zinc-binding uS14 subfamily. Part of the 30S ribosomal subunit.

Binds 16S rRNA, required for the assembly of 30S particles. This Natronomonas pharaonis (strain ATCC 35678 / DSM 2160 / CIP 103997 / JCM 8858 / NBRC 14720 / NCIMB 2260 / Gabara) (Halobacterium pharaonis) protein is Small ribosomal subunit protein uS14B.